Reading from the N-terminus, the 263-residue chain is TPR repeat-containing protein DDB_G0285095 (263 aa).

Positions 1–25 (MGCCGSKEKYNGEDVPKSQRLENRP) are enriched in basic and acidic residues. The segment at 1–62 (MGCCGSKEKY…ASASQQNNPT (62 aa)) is disordered. TPR repeat units lie at residues 87 to 120 (SDLLAQYGVLLSMEGKNKEAEESLRKAVEVDTDN), 121 to 154 (SRAWQAYGEFLERTNNPKKAKEVYGEAYKHAAPK), and 162 to 195 (SSLLLSYAIFIQKSGEIDKAEKLYKRIVTSGARS).

The chain is TPR repeat-containing protein DDB_G0285095 from Dictyostelium discoideum (Social amoeba).